The primary structure comprises 98 residues: Parvalbumin beta 1 (98 aa).

S1 is subject to N-acetylserine. EF-hand domains follow at residues 32–67 (KIGL…FSAG) and 67–98 (GARA…MIKG). D45, D47, S49, F51, E53, E56, D80, D82, D84, K86, and E91 together coordinate Ca(2+).

This sequence belongs to the parvalbumin family.

Functionally, in muscle, parvalbumin is thought to be involved in relaxation after contraction. It binds two calcium ions. In Macruronus magellanicus (Patagonian grenadier), this protein is Parvalbumin beta 1.